The following is a 242-amino-acid chain: Uridylate kinase (242 aa).

ATP is bound at residue 12 to 15 (KLSG). The involved in allosteric activation by GTP stretch occupies residues 20–25 (GNDGFG). Residue Gly54 coordinates UMP. Gly55 and Arg59 together coordinate ATP. UMP is bound by residues Asp74 and 135–142 (TGNPYFST). Asn163, Tyr169, and Asp172 together coordinate ATP.

Belongs to the UMP kinase family. As to quaternary structure, homohexamer.

The protein localises to the cytoplasm. The enzyme catalyses UMP + ATP = UDP + ADP. The protein operates within pyrimidine metabolism; CTP biosynthesis via de novo pathway; UDP from UMP (UMPK route): step 1/1. Its activity is regulated as follows. Allosterically activated by GTP. Inhibited by UTP. Functionally, catalyzes the reversible phosphorylation of UMP to UDP. In Listeria innocua serovar 6a (strain ATCC BAA-680 / CLIP 11262), this protein is Uridylate kinase.